The sequence spans 252 residues: Imidazole glycerol phosphate synthase subunit HisF (252 aa).

Catalysis depends on residues Asp11 and Asp130.

This sequence belongs to the HisA/HisF family. In terms of assembly, heterodimer of HisH and HisF.

The protein resides in the cytoplasm. The catalysed reaction is 5-[(5-phospho-1-deoxy-D-ribulos-1-ylimino)methylamino]-1-(5-phospho-beta-D-ribosyl)imidazole-4-carboxamide + L-glutamine = D-erythro-1-(imidazol-4-yl)glycerol 3-phosphate + 5-amino-1-(5-phospho-beta-D-ribosyl)imidazole-4-carboxamide + L-glutamate + H(+). The protein operates within amino-acid biosynthesis; L-histidine biosynthesis; L-histidine from 5-phospho-alpha-D-ribose 1-diphosphate: step 5/9. In terms of biological role, IGPS catalyzes the conversion of PRFAR and glutamine to IGP, AICAR and glutamate. The HisF subunit catalyzes the cyclization activity that produces IGP and AICAR from PRFAR using the ammonia provided by the HisH subunit. In Lacticaseibacillus casei (strain BL23) (Lactobacillus casei), this protein is Imidazole glycerol phosphate synthase subunit HisF.